A 195-amino-acid chain; its full sequence is ATP-dependent Clp protease proteolytic subunit (195 aa).

The Nucleophile role is filled by S98. H123 is a catalytic residue.

It belongs to the peptidase S14 family. As to quaternary structure, fourteen ClpP subunits assemble into 2 heptameric rings which stack back to back to give a disk-like structure with a central cavity, resembling the structure of eukaryotic proteasomes.

The protein resides in the cytoplasm. The enzyme catalyses Hydrolysis of proteins to small peptides in the presence of ATP and magnesium. alpha-casein is the usual test substrate. In the absence of ATP, only oligopeptides shorter than five residues are hydrolyzed (such as succinyl-Leu-Tyr-|-NHMec, and Leu-Tyr-Leu-|-Tyr-Trp, in which cleavage of the -Tyr-|-Leu- and -Tyr-|-Trp bonds also occurs).. Cleaves peptides in various proteins in a process that requires ATP hydrolysis. Has a chymotrypsin-like activity. Plays a major role in the degradation of misfolded proteins. In Helicobacter pylori (strain Shi470), this protein is ATP-dependent Clp protease proteolytic subunit.